A 4481-amino-acid polypeptide reads, in one-letter code: Dynein axonemal heavy chain 17 (4481 aa).

The interval 1–1792 (MPDLRIDYLE…FANICDAQIK (1792 aa)) is stem. The stretch at 521–569 (LLYMCGGLLERPLILVEVVPRYSVMLEMFNTELDNAKLMYDAQMAASAD) is one Kelch 1 repeat. Residues 759–826 (ENVMEYIQEM…GRVANLNKRY (68 aa)) adopt a coiled-coil conformation. TPR repeat units lie at residues 1533–1566 (VVEATNKPDLYNKLENLKMSLAVCEKALAEYLET) and 1688–1722 (IWWTTEVGLAFARLEEGYENAIKDYNKKQISQLNA). 4 AAA regions span residues 1793-2014 (YSYE…VLVV), 2074-2295 (KIIK…IGFK), 2401-2649 (ELDP…IFQG), and 2747-2996 (SYNE…ERRY). ATP-binding positions include 1831-1838 (GPAGTGKT) and 2112-2119 (GNAGSGKS). The stretch at 2229–2275 (ISHLRTATPATVSRAGILYINPADLGWNPVVSSWIERRKVQSEKANL) is one Kelch 2 repeat. ATP is bound by residues 2439–2446 (GNAGTGKS) and 2785–2792 (GVGGSGKQ). A Kelch 3 repeat occupies 2782–2834 (LLVGVGGSGKQSLSRLAAYISALDVFQITLKKGYAIPDLKMDLATQYIKSAVK). 2 coiled-coil regions span residues 3011–3071 (YQNL…IQVV) and 3241–3293 (DVAP…EKIK). Positions 3011-3297 (YQNLLAKKRM…TAEKIKCQQE (287 aa)) are stalk. 2 AAA regions span residues 3389–3616 (LTDD…EIEE) and 3826–4059 (VKNF…VLYN). A TPR 3 repeat occupies 4138 to 4173 (PESPYLYGLHPNAEIGFLTVTSEKLFRTVLEMQPKE). Kelch repeat units follow at residues 4272–4321 (NLGL…DLLQ) and 4339–4385 (VWLA…DMTA).

It belongs to the dynein heavy chain family. Consists of at least two heavy chains and a number of intermediate and light chains.

The protein resides in the cytoplasm. It localises to the cytoskeleton. It is found in the flagellum axoneme. Force generating protein component of the outer dynein arms (ODAs) in the sperm flagellum. Produces force towards the minus ends of microtubules. Dynein has ATPase activity; the force-producing power stroke is thought to occur on release of ADP. Plays a major role in sperm motility, implicated in sperm flagellar assembly and beating. The polypeptide is Dynein axonemal heavy chain 17 (Mus musculus (Mouse)).